We begin with the raw amino-acid sequence, 184 residues long: Adenylate kinase 2 (184 aa).

Residue 10-15 (GSGKST) participates in ATP binding. The NMP stretch occupies residues 30-59 (STGEILREAISHLSELGRHAQPYMIKGELV). Residues Thr-31, Arg-36, 57–59 (ELV), 85–88 (GYPR), and Gln-92 each bind AMP. The interval 126–132 (GRSLPDD) is LID. ATP is bound at residue Arg-127. Arg-140 is an AMP binding site. Gln-168 is a binding site for ATP.

It belongs to the adenylate kinase family. As to quaternary structure, monomer.

It is found in the cytoplasm. It catalyses the reaction AMP + ATP = 2 ADP. It functions in the pathway purine metabolism; AMP biosynthesis via salvage pathway; AMP from ADP: step 1/1. In terms of biological role, catalyzes the reversible transfer of the terminal phosphate group between ATP and AMP. Plays an important role in cellular energy homeostasis and in adenine nucleotide metabolism. This chain is Adenylate kinase 2, found in Nostoc sp. (strain PCC 7120 / SAG 25.82 / UTEX 2576).